We begin with the raw amino-acid sequence, 424 residues long: MLDIKRIRTDFEAVAEKLATRGVDAAVLNEMKEIDAKRRNILVKVETLKAERNTVSAEIAQAKRNKENTDDKIAAMQNLSAEVKALDAELAEIDAKLTEFTTTLPNIPADSVPVGADEDDNVEVRRWGTPREFDFEPKAHWDLGEDLGILDWERGGKVTGARFLFYKGLGARLERAIYNFMLDEHGKEGYTEVITPYIVNHDSMFGTGQYPKFKEDTFELSDTNFVLIPTAEVPLTNYYRDEILDGKDLPIYFTAMSPSFRSEAGSAGRDTRGLIRLHQFHKVEMVKFAKPEESYEELEKMTANAENILQKLNLPYRVVALSTGDMGFSATKTYDLEVWIPAQNNYREISSCSNTEDFQARRAQIRYRDEADGKVKLLHTLNGSGLAVGRTVAAILENYQNEDGSVTIPEALRPYMGGAEVIKP.

Position 230–232 (230–232) interacts with L-serine; it reads TAE. Residue 261-263 participates in ATP binding; it reads RSE. An L-serine-binding site is contributed by Glu284. 348 to 351 provides a ligand contact to ATP; sequence EISS. Ser384 is a binding site for L-serine.

This sequence belongs to the class-II aminoacyl-tRNA synthetase family. Type-1 seryl-tRNA synthetase subfamily. Homodimer. The tRNA molecule binds across the dimer.

The protein resides in the cytoplasm. The enzyme catalyses tRNA(Ser) + L-serine + ATP = L-seryl-tRNA(Ser) + AMP + diphosphate + H(+). The catalysed reaction is tRNA(Sec) + L-serine + ATP = L-seryl-tRNA(Sec) + AMP + diphosphate + H(+). Its pathway is aminoacyl-tRNA biosynthesis; selenocysteinyl-tRNA(Sec) biosynthesis; L-seryl-tRNA(Sec) from L-serine and tRNA(Sec): step 1/1. Its function is as follows. Catalyzes the attachment of serine to tRNA(Ser). Is also able to aminoacylate tRNA(Sec) with serine, to form the misacylated tRNA L-seryl-tRNA(Sec), which will be further converted into selenocysteinyl-tRNA(Sec). In Streptococcus pneumoniae serotype 2 (strain D39 / NCTC 7466), this protein is Serine--tRNA ligase.